The chain runs to 258 residues: Imidazole glycerol phosphate synthase subunit HisF (258 aa).

Active-site residues include Asp-11 and Asp-130.

It belongs to the HisA/HisF family. Heterodimer of HisH and HisF.

The protein localises to the cytoplasm. It catalyses the reaction 5-[(5-phospho-1-deoxy-D-ribulos-1-ylimino)methylamino]-1-(5-phospho-beta-D-ribosyl)imidazole-4-carboxamide + L-glutamine = D-erythro-1-(imidazol-4-yl)glycerol 3-phosphate + 5-amino-1-(5-phospho-beta-D-ribosyl)imidazole-4-carboxamide + L-glutamate + H(+). Its pathway is amino-acid biosynthesis; L-histidine biosynthesis; L-histidine from 5-phospho-alpha-D-ribose 1-diphosphate: step 5/9. In terms of biological role, IGPS catalyzes the conversion of PRFAR and glutamine to IGP, AICAR and glutamate. The HisF subunit catalyzes the cyclization activity that produces IGP and AICAR from PRFAR using the ammonia provided by the HisH subunit. This chain is Imidazole glycerol phosphate synthase subunit HisF, found in Klebsiella pneumoniae (strain 342).